The primary structure comprises 437 residues: tRNA-2-methylthio-N(6)-dimethylallyladenosine synthase (437 aa).

An MTTase N-terminal domain is found at 1–117 (MKFYIKTFGC…LPNLLEEAKS (117 aa)). [4Fe-4S] cluster contacts are provided by Cys-10, Cys-46, Cys-80, Cys-156, Cys-160, and Cys-163. Positions 142 to 371 (RENKYTAFVT…INLQKDITFK (230 aa)) constitute a Radical SAM core domain. The region spanning 374–435 (LEYQDKIVEI…RFSLEGSIIG (62 aa)) is the TRAM domain.

The protein belongs to the methylthiotransferase family. MiaB subfamily. As to quaternary structure, monomer. Requires [4Fe-4S] cluster as cofactor.

It localises to the cytoplasm. It carries out the reaction N(6)-dimethylallyladenosine(37) in tRNA + (sulfur carrier)-SH + AH2 + 2 S-adenosyl-L-methionine = 2-methylsulfanyl-N(6)-dimethylallyladenosine(37) in tRNA + (sulfur carrier)-H + 5'-deoxyadenosine + L-methionine + A + S-adenosyl-L-homocysteine + 2 H(+). Catalyzes the methylthiolation of N6-(dimethylallyl)adenosine (i(6)A), leading to the formation of 2-methylthio-N6-(dimethylallyl)adenosine (ms(2)i(6)A) at position 37 in tRNAs that read codons beginning with uridine. In Sulfurihydrogenibium sp. (strain YO3AOP1), this protein is tRNA-2-methylthio-N(6)-dimethylallyladenosine synthase.